The following is an 89-amino-acid chain: Small ribosomal subunit protein uS14A (89 aa).

It belongs to the universal ribosomal protein uS14 family. Part of the 30S ribosomal subunit. Contacts proteins S3 and S10.

Binds 16S rRNA, required for the assembly of 30S particles and may also be responsible for determining the conformation of the 16S rRNA at the A site. This chain is Small ribosomal subunit protein uS14A, found in Listeria monocytogenes serotype 4b (strain F2365).